A 198-amino-acid chain; its full sequence is Large ribosomal subunit protein bL25 (198 aa).

The protein belongs to the bacterial ribosomal protein bL25 family. CTC subfamily. Part of the 50S ribosomal subunit; part of the 5S rRNA/L5/L18/L25 subcomplex. Contacts the 5S rRNA. Binds to the 5S rRNA independently of L5 and L18.

Its function is as follows. This is one of the proteins that binds to the 5S RNA in the ribosome where it forms part of the central protuberance. This chain is Large ribosomal subunit protein bL25, found in Gloeothece citriformis (strain PCC 7424) (Cyanothece sp. (strain PCC 7424)).